The following is a 512-amino-acid chain: Protein spinster homolog 3 (512 aa).

The disordered stretch occupies residues 1–30 (MAGGMSAECPEPGPGGLQGQSPGPGRQCPP). 12 consecutive transmembrane segments (helical) span residues 50 to 70 (VLCY…GVLL), 84 to 104 (GLLQ…FGYL), 112 to 132 (ATMS…SFIS), 145 to 165 (IVGT…GDLF), 173 to 193 (VLAV…VLGS), 204 to 224 (WALR…ILLV), 260 to 280 (FVWS…LGFW), 309 to 329 (LIFG…GAEA), 343 to 365 (LICA…LAPT), 377 to 397 (GELL…SVVV), 411 to 431 (VGHI…SSVL), and 450 to 470 (FLCC…TALY). The interval 481–512 (PVTGTPDSNDVDSNDLERQGLLSGAGASTEEP) is disordered.

Belongs to the major facilitator superfamily. Spinster (TC 2.A.1.49) family.

Its subcellular location is the membrane. Functionally, sphingolipid transporter. The chain is Protein spinster homolog 3 (SPNS3) from Homo sapiens (Human).